The following is a 296-amino-acid chain: Light-independent protochlorophyllide reductase iron-sulfur ATP-binding protein (296 aa).

Residues 39-44 (GIGKST) and Lys-68 contribute to the ATP site. Residue Ser-43 participates in Mg(2+) binding. 2 residues coordinate [4Fe-4S] cluster: Cys-124 and Cys-158. 209-210 (NR) contributes to the ATP binding site.

Belongs to the NifH/BchL/ChlL family. In terms of assembly, homodimer. Protochlorophyllide reductase is composed of three subunits; ChlL, ChlN and ChlB. [4Fe-4S] cluster is required as a cofactor.

The enzyme catalyses chlorophyllide a + oxidized 2[4Fe-4S]-[ferredoxin] + 2 ADP + 2 phosphate = protochlorophyllide a + reduced 2[4Fe-4S]-[ferredoxin] + 2 ATP + 2 H2O. It functions in the pathway porphyrin-containing compound metabolism; chlorophyll biosynthesis (light-independent). In terms of biological role, component of the dark-operative protochlorophyllide reductase (DPOR) that uses Mg-ATP and reduced ferredoxin to reduce ring D of protochlorophyllide (Pchlide) to form chlorophyllide a (Chlide). This reaction is light-independent. The L component serves as a unique electron donor to the NB-component of the complex, and binds Mg-ATP. This Prochlorococcus marinus (strain MIT 9313) protein is Light-independent protochlorophyllide reductase iron-sulfur ATP-binding protein.